The sequence spans 62 residues: Beta-defensin 37 (62 aa).

The N-terminal stretch at 1-16 (MKFSYFLLLLLSLSNF) is a signal peptide. 3 disulfide bridges follow: Cys-29–Cys-58, Cys-36–Cys-51, and Cys-41–Cys-59.

Belongs to the beta-defensin family. Only expressed in epididymis (corpus and cauda).

The protein localises to the secreted. Has antibacterial activity. This Mus musculus (Mouse) protein is Beta-defensin 37 (Defb37).